The primary structure comprises 83 residues: Small cysteine-rich protein 3 (83 aa).

The signal sequence occupies residues 1–21; that stretch reads MGVKLNICLLLLLVAIISSQG. Positions 22-39 are excised as a propeptide; sequence FNLRKKEDSKDEKPFGNY. A compositionally biased stretch (basic and acidic residues) spans 25–35; sequence RKKEDSKDEKP. The interval 25–44 is disordered; it reads RKKEDSKDEKPFGNYRRGSP.

This sequence belongs to the Cnidaria small cysteine-rich protein (SCRiP) family. alpha subfamily. Post-translationally, contains 4 disulfide bonds.

The protein localises to the secreted. It localises to the nematocyst. This recombinant protein induces severe neurotoxicity on zebrafish larvae (Danio rerio) at a concentration of 230 mg/ml, but does not show toxicity when injected in blowfly larvae (Sarcophaga falculata). All fish incubated with this protein died within 16 hours of exposure. Has also been claimed to be implied in calcification, but this function seems improbable. This chain is Small cysteine-rich protein 3, found in Acropora millepora (Staghorn coral).